The primary structure comprises 897 residues: Alpha-actinin-2 (897 aa).

The segment at 1-257 (MNSMNQIETN…IMTYVSCFYH (257 aa)) is actin-binding. Calponin-homology (CH) domains are found at residues 41–145 (KQQR…LRFA) and 154–260 (TSAK…HAFA). 4 Spectrin repeats span residues 284–394 (RLME…WLLN), 404–509 (HLAE…ALER), 519–630 (QLHL…SLQE), and 640–743 (RLRR…EVET). EF-hand domains lie at 756 to 791 (EQMN…MGYD) and 792 to 827 (LGEA…ETAD). The Ca(2+) site is built by aspartate 769, asparagine 773, aspartate 780, aspartate 805, asparagine 807, and threonine 811.

It belongs to the alpha-actinin family. As to quaternary structure, homodimer; antiparallel. Ubiquitinated by FBXL22, leading to proteasomal degradation.

Its subcellular location is the cytoplasm. It is found in the myofibril. It localises to the sarcomere. The protein resides in the z line. Its function is as follows. F-actin cross-linking protein which is thought to anchor actin to a variety of intracellular structures. This is a bundling protein. In Gallus gallus (Chicken), this protein is Alpha-actinin-2 (ACTN2).